A 130-amino-acid polypeptide reads, in one-letter code: uncharacterized protein (130 aa).

Disordered stretches follow at residues 1–47 and 78–130; these read MTFY…QSNT and QTLE…SESS. A compositionally biased stretch (polar residues) spans 13–33; that stretch reads QWKQLQTQQNKKNSPRPVTSS. Over residues 86 to 110 the composition is skewed to basic residues; it reads PSKHKRKRTKYRRTKKSKHHSRKKT. The span at 117–130 shows a compositional bias: basic and acidic residues; sequence SERDSTTGRESESS.

This is an uncharacterized protein from Torque teno mini virus 1 (isolate TLMV-CBD279).